A 122-amino-acid polypeptide reads, in one-letter code: Large ribosomal subunit protein uL14 (122 aa).

This sequence belongs to the universal ribosomal protein uL14 family. In terms of assembly, part of the 50S ribosomal subunit. Forms a cluster with proteins L3 and L19. In the 70S ribosome, L14 and L19 interact and together make contacts with the 16S rRNA in bridges B5 and B8.

In terms of biological role, binds to 23S rRNA. Forms part of two intersubunit bridges in the 70S ribosome. This is Large ribosomal subunit protein uL14 from Borrelia recurrentis (strain A1).